A 91-amino-acid polypeptide reads, in one-letter code: DNA-directed RNA polymerase subunit omega (91 aa).

The protein belongs to the RNA polymerase subunit omega family. The RNAP catalytic core consists of 2 alpha, 1 beta, 1 beta' and 1 omega subunit. When a sigma factor is associated with the core the holoenzyme is formed, which can initiate transcription.

It catalyses the reaction RNA(n) + a ribonucleoside 5'-triphosphate = RNA(n+1) + diphosphate. Its function is as follows. Promotes RNA polymerase assembly. Latches the N- and C-terminal regions of the beta' subunit thereby facilitating its interaction with the beta and alpha subunits. This is DNA-directed RNA polymerase subunit omega from Photorhabdus laumondii subsp. laumondii (strain DSM 15139 / CIP 105565 / TT01) (Photorhabdus luminescens subsp. laumondii).